Consider the following 382-residue polypeptide: MIELDLCFGLLLLILFGLLSLRNGHVSLAHIRFICQCWLVMITPLEVQDFALCILTVVLLQSFHSFEALLFLLLAYIGQLYMMHSCNLVSFYVCLEAQTLCVVVLCGLLARGASTSFSVEAALKFLLLSAMVSGMALFWFSAMYQRTGSLDMVGQETFWILLVMLFKLGVAPMHMWSVDLYGSIPKSLLLYLSTAPKLSLFTFWASSWHHDFSVGVFILFSMFIGSIGAYGQPALRSLFAYSTINEIGLLLLAVETAGFHTLYQHLGIYIITQLLLWNLTDKRLFALCAVSLAGLPPFAGFFGKAWIFWHAMSVQAFSLLAAALFCTLLSLVYYLRVIRLFWTAPVHTAASFTGAPNQTTLTSACAVALAFAPVMLVKPFVI.

The next 12 membrane-spanning stretches (helical) occupy residues 1-21 (MIEL…LLSL), 33-53 (FICQ…FALC), 54-74 (ILTV…FLLL), 88-108 (LVSF…LCGL), 123-143 (LKFL…FSAM), 158-178 (FWIL…MWSV), 188-208 (LLLY…ASSW), 212-232 (FSVG…AYGQ), 239-259 (FAYS…TAGF), 260-280 (HTLY…WNLT), 284-304 (LFAL…FFGK), and 305-325 (AWIF…AALF).

It belongs to the complex I subunit 2 family.

Its subcellular location is the mitochondrion inner membrane. It catalyses the reaction a ubiquinone + NADH + 5 H(+)(in) = a ubiquinol + NAD(+) + 4 H(+)(out). Functionally, core subunit of the mitochondrial membrane respiratory chain NADH dehydrogenase (Complex I) that is believed to belong to the minimal assembly required for catalysis. Complex I functions in the transfer of electrons from NADH to the respiratory chain. The immediate electron acceptor for the enzyme is believed to be ubiquinone. This chain is NADH-ubiquinone oxidoreductase chain 2 (ND2), found in Chlamydomonas reinhardtii (Chlamydomonas smithii).